Here is a 364-residue protein sequence, read N- to C-terminus: MSVMVVRKKVTRKWEKLPGRNTFCCDGRVMMARQKGIFYLTLFLILGTCTLFFAFECRYLAVQLSPAIPVFAAMLFLFSMATLLRTSFSDPGVIPRALPDEAAFIEMEIEATNGAVPQGQRPPPRIKNFQINNQIVKLKYCYTCKIFRPPRASHCSICDNCVERFDHHCPWVGNCVGKRNYRYFYLFILSLSLLTIYVFAFNIVYVALKSLKIGFLETLKETPGTVLEVLICFFTLWSVVGLTGFHTFLVALNQTTNEDIKGSWTGKNRVQNPYSHGNIVKNCCEVLCGPLPPSVLDRRGILPLEESGSRPPSTQETSSSLLPQSPASTEHMNSNEMAEDTSIPEEMPPPEPPEPPQEASEAEK.

Topologically, residues 1–35 (MSVMVVRKKVTRKWEKLPGRNTFCCDGRVMMARQK) are cytoplasmic. Residues 36–56 (GIFYLTLFLILGTCTLFFAFE) form a helical membrane-spanning segment. The Lumenal portion of the chain corresponds to 57–63 (CRYLAVQ). A helical transmembrane segment spans residues 64 to 84 (LSPAIPVFAAMLFLFSMATLL). Residues 85-183 (RTSFSDPGVI…NCVGKRNYRY (99 aa)) are Cytoplasmic-facing. The DHHC domain occupies 139 to 189 (KYCYTCKIFRPPRASHCSICDNCVERFDHHCPWVGNCVGKRNYRYFYLFIL). Residue Cys-169 is the S-palmitoyl cysteine intermediate of the active site. A helical membrane pass occupies residues 184–204 (FYLFILSLSLLTIYVFAFNIV). Topologically, residues 205-228 (YVALKSLKIGFLETLKETPGTVLE) are lumenal. Residues 229–249 (VLICFFTLWSVVGLTGFHTFL) form a helical membrane-spanning segment. The Cytoplasmic portion of the chain corresponds to 250-364 (VALNQTTNED…PPQEASEAEK (115 aa)). The interval 303-364 (PLEESGSRPP…PPQEASEAEK (62 aa)) is disordered. A compositionally biased stretch (polar residues) spans 310–336 (RPPSTQETSSSLLPQSPASTEHMNSNE). Pro residues predominate over residues 346 to 356 (EMPPPEPPEPP).

It belongs to the DHHC palmitoyltransferase family. ERF2/ZDHHC9 subfamily. Interacts with GOLGA7.

It localises to the endoplasmic reticulum membrane. Its subcellular location is the golgi apparatus membrane. The catalysed reaction is L-cysteinyl-[protein] + hexadecanoyl-CoA = S-hexadecanoyl-L-cysteinyl-[protein] + CoA. Palmitoyltransferase that catalyzes the addition of palmitate onto various protein substrates, such as ADRB2, GSDMD, HRAS, NRAS and CGAS. The ZDHHC9-GOLGA7 complex is a palmitoyltransferase specific for HRAS and NRAS. May have a palmitoyltransferase activity toward the beta-2 adrenergic receptor/ADRB2 and therefore regulate G protein-coupled receptor signaling. Acts as a regulator of innate immunity by catalyzing palmitoylation of CGAS, thereby promoting CGAS homodimerization and cyclic GMP-AMP synthase activity. Activates pyroptosis by catalyzing palmitoylation of gasdermin-D (GSDMD), thereby promoting membrane translocation and pore formation of GSDMD. The polypeptide is Palmitoyltransferase ZDHHC9 (Zdhhc9) (Mus musculus (Mouse)).